The chain runs to 691 residues: Cyclic nucleotide-gated channel alpha-1 (691 aa).

Residues 1–168 lie on the Cytoplasmic side of the membrane; it reads MKKNIINTWY…PAGNMYYNWL (168 aa). The interval 31-151 is disordered; sequence ENGARSSFSD…KGKDKKEEEK (121 aa). Acidic residues predominate over residues 39–56; sequence SDDDGDDDSASMFEESEN. 2 stretches are compositionally biased toward basic and acidic residues: residues 57-76 and 112-151; these read ETPH…DPSQ and SKSG…EEEK. A helical membrane pass occupies residues 169–190; the sequence is FCITLPVMYNWTMVIARACFDE. The Extracellular portion of the chain corresponds to 191-200; it reads LQSDYLEYWI. A helical transmembrane segment spans residues 201-221; sequence IFDYLSDIVYLLDMFVRTRTG. The Cytoplasmic segment spans residues 222-246; that stretch reads YLEQGLLVREEAKLIEKYKSNLQFK. The chain crosses the membrane as a helical span at residues 247-265; the sequence is LDFLSVIPTDLLYFKLGWN. The Extracellular segment spans residues 266-270; that stretch reads YPEIR. A helical membrane pass occupies residues 271–289; it reads LNRLLRISRMFEFFQRTET. Topologically, residues 290–296 are cytoplasmic; sequence RTNYPNI. The ion conduction pathway stretch occupies residues 294 to 402; the sequence is PNIFRISNLV…GNIGSMISNM (109 aa). Residues 297-320 form a helical membrane-spanning segment; the sequence is FRISNLVMYIVIIIHWNACVYFSI. Residues 321 to 343 lie on the Extracellular side of the membrane; it reads SKAIGFGNDTWVYPDVNDPEFGR. Asn328 carries an N-linked (GlcNAc...) asparagine glycan. 2 consecutive transmembrane segments (helical) span residues 344–378 and 379–403; these read LARK…VFVV and VDFL…SNMN. The interval 361–364 is selectivity filter; it reads TIGE. Positions 404–480 are C-linker; that stretch reads AARAEFQARI…DTLKKVRIFA (77 aa). Residues 404-691 lie on the Cytoplasmic side of the membrane; the sequence is AARAEFQARI…ESRPLDSTQD (288 aa). Residues 484–604 are cyclic nucleotide-binding domain; the sequence is AGLLVELVLK…EEKGKQILMK (121 aa). 3',5'-cyclic GMP contacts are provided by Gly544, Ser547, Arg560, and Thr561. Arg560 and Thr561 together coordinate 3',5'-cyclic AMP. Residues 622 to 676 are a coiled coil; sequence LEEKVTRMEGSVDLLQTRFARILAEYESMQQKLKQRLTKVERFLKPIIDTEFSAL.

It belongs to the cyclic nucleotide-gated cation channel (TC 1.A.1.5) family. CNGA1 subfamily. In terms of assembly, forms heterotetrameric channels composed of CNGA1 and CNGB1 subunits with 3:1 stoichiometry. May also form cyclic nucleotide-activated homotetrameric channels, that are efficiently activated by saturating cGMP, but poorly activated by saturating cAMP compared to the heterotetramer with CNGB1. The channel binds Ca(2+)-bound CALM1 via CaM1 and CaM2 regions of the CNGB1 subunit; this interaction modulates the affinity of the channel for cNMPs in response to intracellular Ca(2+) levels.

It localises to the cell membrane. It carries out the reaction Ca(2+)(in) = Ca(2+)(out). The catalysed reaction is Na(+)(in) = Na(+)(out). The enzyme catalyses K(+)(in) = K(+)(out). It catalyses the reaction NH4(+)(in) = NH4(+)(out). It carries out the reaction Rb(+)(in) = Rb(+)(out). The catalysed reaction is Li(+)(in) = Li(+)(out). The enzyme catalyses Cs(+)(in) = Cs(+)(out). Its function is as follows. Pore-forming subunit of the rod cyclic nucleotide-gated channel. Mediates rod photoresponses at dim light converting transient changes in intracellular cGMP levels into electrical signals. In the dark, cGMP levels are high and keep the channel open enabling a steady inward current carried by Na(+) and Ca(2+) ions that leads to membrane depolarization and neurotransmitter release from synaptic terminals. Upon photon absorption cGMP levels decline leading to channel closure and membrane hyperpolarization that ultimately slows neurotransmitter release and signals the presence of light, the end point of the phototransduction cascade. Conducts cGMP- and cAMP-gated ion currents, with permeability for monovalent and divalent cations. The selectivity for Ca(2+) over Na(+) increases with cGMP concentrations, whereas the selectivity among monovalent ions is independent of the cGMP levels. This chain is Cyclic nucleotide-gated channel alpha-1, found in Canis lupus familiaris (Dog).